The following is a 932-amino-acid chain: Glycine dehydrogenase (decarboxylating) (932 aa).

N6-(pyridoxal phosphate)lysine is present on lysine 685.

This sequence belongs to the GcvP family. In terms of assembly, the glycine cleavage system is composed of four proteins: P, T, L and H. Pyridoxal 5'-phosphate is required as a cofactor.

It carries out the reaction N(6)-[(R)-lipoyl]-L-lysyl-[glycine-cleavage complex H protein] + glycine + H(+) = N(6)-[(R)-S(8)-aminomethyldihydrolipoyl]-L-lysyl-[glycine-cleavage complex H protein] + CO2. Its function is as follows. The glycine cleavage system catalyzes the degradation of glycine. The P protein binds the alpha-amino group of glycine through its pyridoxal phosphate cofactor; CO(2) is released and the remaining methylamine moiety is then transferred to the lipoamide cofactor of the H protein. The chain is Glycine dehydrogenase (decarboxylating) from Brucella canis (strain ATCC 23365 / NCTC 10854 / RM-666).